The primary structure comprises 476 residues: Calcium/calmodulin-dependent protein kinase type 1G (476 aa).

The Protein kinase domain occupies 23 to 277 (FIFMEVLGSG…CEKALSHPWI (255 aa)). ATP contacts are provided by residues 29-37 (LGSGAFSEV) and Lys52. Residue Asp143 is the Proton acceptor of the active site. Residues 277 to 317 (IDGNTALHRDIYPSVSLQIQKNFAKSKWRQAFNAAAVVHHM) form an autoinhibitory domain region. The segment at 297 to 318 (KNFAKSKWRQAFNAAAVVHHMR) is calmodulin-binding. The interval 325-352 (HSPGVRPEVENRPPETQASETSRPSSPE) is disordered. The segment covering 338-352 (PETQASETSRPSSPE) has biased composition (polar residues).

It belongs to the protein kinase superfamily. CAMK Ser/Thr protein kinase family. CaMK subfamily. Post-translationally, may be prenylated on Cys-473. In terms of tissue distribution, mainly expressed in brain with small amounts in skeletal muscles, kidney, spleen and liver. Strongly expressed in forebrain neocortex, striatum and limbic system.

The protein localises to the cytoplasm. The protein resides in the golgi apparatus membrane. Its subcellular location is the cell membrane. The catalysed reaction is L-seryl-[protein] + ATP = O-phospho-L-seryl-[protein] + ADP + H(+). It carries out the reaction L-threonyl-[protein] + ATP = O-phospho-L-threonyl-[protein] + ADP + H(+). With respect to regulation, activated by Ca(2+)/calmodulin. Binding of calmodulin is thought to result in a conformational change and leads to activation through phosphorylation by CAMKK1. In terms of biological role, calcium/calmodulin-dependent protein kinase belonging to a proposed calcium-triggered signaling cascade. In vitro phosphorylates transcription factor CREB1. In Homo sapiens (Human), this protein is Calcium/calmodulin-dependent protein kinase type 1G (CAMK1G).